Consider the following 127-residue polypeptide: uncharacterized protein (127 aa).

Positions 1 to 34 are disordered; it reads MKNPESSGVSSSPQIQRVSPSSSSTSPSPPSIGT. Residues 9–34 show a composition bias toward low complexity; the sequence is VSSSPQIQRVSPSSSSTSPSPPSIGT. The next 2 membrane-spanning stretches (helical) occupy residues 47–67 and 84–104; these read IAAV…PLAM and TIAV…YLLV.

The protein resides in the membrane. This is an uncharacterized protein from Saccharomyces cerevisiae (strain ATCC 204508 / S288c) (Baker's yeast).